We begin with the raw amino-acid sequence, 488 residues long: Annexin A7 (488 aa).

A compositionally biased stretch (pro residues) spans 1-18 (MSYPGYPPTGYPPFPGYP). Disordered regions lie at residues 1 to 49 (MSYP…YPQV) and 71 to 143 (GYPG…PTYP). The interval 1–143 (MSYPGYPPTG…QYPGGQPTYP (143 aa)) is repeat-rich region. The 3 X 5 AA tandem repeats of G-Y-P-P-X stretch occupies residues 5–20 (GYPPTGYPPFPGYPPA). The segment covering 89 to 102 (PGQGFGVPPGGAGF) has biased composition (gly residues). 4 Annexin repeats span residues 185–256 (FDAI…ALFM), 257–328 (PPTY…SMCQ), 340–412 (QMAQ…TILQ), and 416–487 (NRPA…AIVG). Residue lysine 233 is modified to N6-acetyllysine.

The protein belongs to the annexin family. In terms of assembly, interacts with PDCD6. In terms of tissue distribution, isoform 1 is expressed in brain, heart and skeletal muscle. Isoform 2 is more abundant in liver, lung, kidney, spleen, fibroblasts and placenta.

Calcium/phospholipid-binding protein which promotes membrane fusion and is involved in exocytosis. The protein is Annexin A7 (ANXA7) of Homo sapiens (Human).